The chain runs to 483 residues: Glutamyl-tRNA(Gln) amidotransferase subunit A (483 aa).

Active-site charge relay system residues include Lys-75 and Ser-150. Ser-174 functions as the Acyl-ester intermediate in the catalytic mechanism.

This sequence belongs to the amidase family. GatA subfamily. As to quaternary structure, heterotrimer of A, B and C subunits.

It catalyses the reaction L-glutamyl-tRNA(Gln) + L-glutamine + ATP + H2O = L-glutaminyl-tRNA(Gln) + L-glutamate + ADP + phosphate + H(+). In terms of biological role, allows the formation of correctly charged Gln-tRNA(Gln) through the transamidation of misacylated Glu-tRNA(Gln) in organisms which lack glutaminyl-tRNA synthetase. The reaction takes place in the presence of glutamine and ATP through an activated gamma-phospho-Glu-tRNA(Gln). The protein is Glutamyl-tRNA(Gln) amidotransferase subunit A of Legionella pneumophila (strain Paris).